The primary structure comprises 564 residues: Keratin, type II cytoskeletal 6C (564 aa).

The span at 1–11 (MASTSTTIRSH) shows a compositional bias: low complexity. Residues 1–23 (MASTSTTIRSHSSSRRGFSANSA) form a disordered region. Ala-2 carries the post-translational modification N-acetylalanine. A head region spans residues 2 to 162 (ASTSTTIRSH…DPAIQRVRAE (161 aa)). Ser-60 is modified (phosphoserine). The interval 163–198 (EREQIKTLNNKFASFIDKVRFLEQQNKVLDTKWTLL) is coil 1A. The region spanning 163-476 (EREQIKTLNN…KLLEGEECRL (314 aa)) is the IF rod domain. The tract at residues 199 to 217 (QEQGTKTVRQNLEPLFEQY) is linker 1. Residues 218 to 309 (INNLRRQLDS…ALYDAELSQM (92 aa)) form a coil 1B region. Residues 310–333 (QTHISDTSVVLSMDNNRNLDLDSI) are linker 12. The coil 2 stretch occupies residues 334–472 (IAEVKAQYEE…ATYRKLLEGE (139 aa)). The segment at 473–564 (ECRLNGEGVG…SSSSRKSYKH (92 aa)) is tail.

This sequence belongs to the intermediate filament family. Heterodimer of a type I and a type II keratin. KRT6 isomers associate with KRT16 and/or KRT17. In terms of tissue distribution, constitutively expressed in distinct types of epithelia such as those in oral mucosa, esophagus, papillae of tongue and hair follicle outer root sheath.

The polypeptide is Keratin, type II cytoskeletal 6C (KRT6C) (Homo sapiens (Human)).